We begin with the raw amino-acid sequence, 317 residues long: MTTQLDALRNMTVVVADTGDIEAIKKYQPQDATTNPSLILSASALPQYASLIDDAINYAKAKSTDKAQQLIDAEDKLAVNIGLEILKIVPGRISTEVDARLSYDTAATVEKARKLIKLYNEAGINNDRILIKVASTWQGIRAAEILEKEGINCNLTLLFSQAQARACAEAGVYLISPFVGRILDWYKANTDKKEYVPNEDPGVISVTSIYNYYKQYGYQTVVMGASFRNIGEITELAGCDRLTIAPALLKELQESNADLPRKLDYKGEVKPKPAPLTESQFYWEHNNDPMAVDKLAEGIRKFAADIEKLEAMLSTKL.

Catalysis depends on Lys-132, which acts as the Schiff-base intermediate with substrate.

This sequence belongs to the transaldolase family. Type 1 subfamily. In terms of assembly, homodimer.

The protein localises to the cytoplasm. It carries out the reaction D-sedoheptulose 7-phosphate + D-glyceraldehyde 3-phosphate = D-erythrose 4-phosphate + beta-D-fructose 6-phosphate. Its pathway is carbohydrate degradation; pentose phosphate pathway; D-glyceraldehyde 3-phosphate and beta-D-fructose 6-phosphate from D-ribose 5-phosphate and D-xylulose 5-phosphate (non-oxidative stage): step 2/3. In terms of biological role, transaldolase is important for the balance of metabolites in the pentose-phosphate pathway. The chain is Transaldolase from Mannheimia succiniciproducens (strain KCTC 0769BP / MBEL55E).